The chain runs to 152 residues: Early glycoprotein GP48 (152 aa).

An N-terminal signal peptide occupies residues 1–25 (MVMMLRTWRLLPMVLLAAYCYCVFG). N-linked (GlcNAc...) asparagine; by host glycans are attached at residues Asn48, Asn53, Asn61, Asn69, Asn108, Asn112, Asn122, Asn139, and Asn148.

It belongs to the RL11 family. Post-translationally, N-glycosylated and possibly O-glycosylated.

Its subcellular location is the virion membrane. In Homo sapiens (Human), this protein is Early glycoprotein GP48 (UL4).